A 536-amino-acid polypeptide reads, in one-letter code: Cytochrome P450 monooxygenase macC (536 aa).

The chain crosses the membrane as a helical span at residues 2–22; that stretch reads ALLYITTAALALLLLFLRAVF. Cysteine 448 lines the heme pocket.

Belongs to the cytochrome P450 family. Heme serves as cofactor.

The protein resides in the membrane. It functions in the pathway secondary metabolite biosynthesis; terpenoid biosynthesis. Cytochrome P450 monooxygenase; part of the gene cluster that mediates the biosynthesis of macrophorins, isoprenoid epoxycyclohexenones containing cyclized drimane moieties. The first step of the pathway is the synthesis of 6-methylsalicylic acid (6-MSA) by the polyketide synthase macA. 6-MSA is then converted to m-cresol by the decarboxylase macB. The cytochrome P450 monooxygenase macC then catalyzes the oxidation of m-cresol to toluquinol. Epoxidation of toluquinol is then performed by the short chain dehydrogenase macD, with the help of macE, and a further prenylation by macG leads to 7-deacetoxyyanuthone A. The next step is the hydroxylation of C-22 of 7-deacetoxyyanuthone A by the cytochrome P450 monooxygenase macH to yield 22-deacetylyanuthone A. O-Mevalon transferase macI then attaches mevalon to the hydroxyl group of 22-deacetylyanuthone A to produce yanuthone E. The terpene cyclase macJ catalyzes the cyclization of 22-deacetylyanuthone A to macrophorin A. MacJ is also able to catalyze cyclization of yanuthone E and 7-deacetoxyyanuthone A to their corresponding macrophorins. The macJ products can be further modified by macH and macJ, as well as by the FAD-dependent monooxygenase macF, to produce additional macrophorins, including 4'-oxomacrophorin A, 4'-oxomacrophorin D and 4'-oxomacrophorin E. The chain is Cytochrome P450 monooxygenase macC from Penicillium terrestre.